The primary structure comprises 904 residues: Protein translocase subunit SecA (904 aa).

Residues Gln89, Gly107–Thr111, and Asp502 each bind ATP. The Zn(2+) site is built by Cys886, Cys888, Cys897, and His898.

The protein belongs to the SecA family. In terms of assembly, monomer and homodimer. Part of the essential Sec protein translocation apparatus which comprises SecA, SecYEG and auxiliary proteins SecDF-YajC and YidC. Requires Zn(2+) as cofactor.

Its subcellular location is the cell inner membrane. It localises to the cytoplasm. It catalyses the reaction ATP + H2O + cellular proteinSide 1 = ADP + phosphate + cellular proteinSide 2.. In terms of biological role, part of the Sec protein translocase complex. Interacts with the SecYEG preprotein conducting channel. Has a central role in coupling the hydrolysis of ATP to the transfer of proteins into and across the cell membrane, serving both as a receptor for the preprotein-SecB complex and as an ATP-driven molecular motor driving the stepwise translocation of polypeptide chains across the membrane. The polypeptide is Protein translocase subunit SecA (Rhizobium etli (strain CIAT 652)).